The following is a 732-amino-acid chain: Prolyl tripeptidyl peptidase (732 aa).

The signal sequence occupies residues 1-24 (MKKTIFQQLFLSVCALTVALPCSA). Residues Ser-603, Asp-678, and His-710 each act as charge relay system in the active site.

It belongs to the peptidase S9B family. In terms of processing, the N-terminus is blocked.

The catalysed reaction is Hydrolysis of Xaa-Xaa-Pro-|-Yaa- releasing the N-terminal tripeptide of a peptide with Pro as the third residue (position P1) and where Yaa is not proline.. Strongly inhibited by diisopropyl fluorophosphate and Pefabloc. Weakly inhibited by 3,4-dichloroisocumarin. Not inhibited by phenylmethylsulfonyl fluoride, leupeptin, antipain or prolinal. Activated by iodoacetamide. Its function is as follows. Serine proteinase. Releases tripeptides from the free amino terminus of proteins. Has a requirement for Pro in the P1 position, but is inactivated by Pro in the P1' position. The chain is Prolyl tripeptidyl peptidase from Porphyromonas gingivalis (strain ATCC BAA-308 / W83).